The primary structure comprises 6668 residues: Centrosome-associated protein CEP250 (6668 aa).

Coiled coils occupy residues 562-589, 632-666, 873-988, 1042-1087, 1252-1307, 1333-1427, 1501-1538, 1594-1688, 1896-1930, 1975-2224, 2298-3272, 3298-3436, 3526-3599, 3697-3773, 3856-4137, 4170-4486, 4515-5078, 5165-5202, 5298-5731, and 5927-6119; these read KAFH…LQQD, TREL…LRAS, HTEC…LRSS, LRMS…HEAA, VEDL…AVSR, LESL…LEKK, RPAA…LGTQ, REAL…SEVA, HDIL…TTEK, EETL…AKQS, AEDE…LKME, QQEL…SRAE, LVQL…AKEE, CASL…EERR, TEML…VEAE, RRKL…LRER, LETL…FRRR, LASL…QETL, LREK…QHRV, and TQAL…LWRQ.

Post-translationally, proteolytically cleaved; only the full-length form localizes to the inner core, while processed version also localizes to the outer core during the onset of cell division.

It localises to the cytoplasm. The protein resides in the cytoskeleton. The protein localises to the microtubule organizing center. It is found in the centrosome. Its function is as follows. Part of the centrosome inner core complex. Required for the linking of centrosomal inner and outer cores. The protein is Centrosome-associated protein CEP250 of Toxoplasma gondii (strain ATCC 50611 / Me49).